The following is a 446-amino-acid chain: tRNA-2-methylthio-N(6)-dimethylallyladenosine synthase (446 aa).

The MTTase N-terminal domain maps to 3-124; the sequence is KKLYIKTYGC…LPELISKVVR (122 aa). [4Fe-4S] cluster-binding residues include Cys-12, Cys-48, Cys-87, Cys-162, Cys-166, and Cys-169. Positions 148–380 constitute a Radical SAM core domain; sequence YPQGASAFIS…QKELSSQQLA (233 aa). A TRAM domain is found at 383 to 446; the sequence is ESCVGSTMKV…SNSLTGEIYT (64 aa).

This sequence belongs to the methylthiotransferase family. MiaB subfamily. As to quaternary structure, monomer. Requires [4Fe-4S] cluster as cofactor.

It is found in the cytoplasm. The enzyme catalyses N(6)-dimethylallyladenosine(37) in tRNA + (sulfur carrier)-SH + AH2 + 2 S-adenosyl-L-methionine = 2-methylsulfanyl-N(6)-dimethylallyladenosine(37) in tRNA + (sulfur carrier)-H + 5'-deoxyadenosine + L-methionine + A + S-adenosyl-L-homocysteine + 2 H(+). Catalyzes the methylthiolation of N6-(dimethylallyl)adenosine (i(6)A), leading to the formation of 2-methylthio-N6-(dimethylallyl)adenosine (ms(2)i(6)A) at position 37 in tRNAs that read codons beginning with uridine. The polypeptide is tRNA-2-methylthio-N(6)-dimethylallyladenosine synthase (Rickettsia canadensis (strain McKiel)).